We begin with the raw amino-acid sequence, 293 residues long: Ribosomal protein L11 methyltransferase (293 aa).

The S-adenosyl-L-methionine site is built by Thr-145, Gly-166, Asp-188, and Asn-230.

It belongs to the methyltransferase superfamily. PrmA family.

The protein resides in the cytoplasm. The enzyme catalyses L-lysyl-[protein] + 3 S-adenosyl-L-methionine = N(6),N(6),N(6)-trimethyl-L-lysyl-[protein] + 3 S-adenosyl-L-homocysteine + 3 H(+). Methylates ribosomal protein L11. The chain is Ribosomal protein L11 methyltransferase from Shewanella baltica (strain OS195).